Here is a 149-residue protein sequence, read N- to C-terminus: 3-dehydroquinate dehydratase (149 aa).

The Proton acceptor role is filled by Y21. Substrate-binding residues include N73, H79, and D86. H99 acts as the Proton donor in catalysis. Substrate is bound by residues 100–101 and R110; that span reads LT.

The protein belongs to the type-II 3-dehydroquinase family. As to quaternary structure, homododecamer.

It carries out the reaction 3-dehydroquinate = 3-dehydroshikimate + H2O. It participates in metabolic intermediate biosynthesis; chorismate biosynthesis; chorismate from D-erythrose 4-phosphate and phosphoenolpyruvate: step 3/7. In terms of biological role, catalyzes a trans-dehydration via an enolate intermediate. The sequence is that of 3-dehydroquinate dehydratase from Thermus thermophilus (strain ATCC BAA-163 / DSM 7039 / HB27).